A 312-amino-acid chain; its full sequence is Taste receptor type 2 member 9 (312 aa).

The Extracellular segment spans residues 1 to 9; sequence MPSAIEAIY. A helical membrane pass occupies residues 10-32; that stretch reads IILIAGELTIGIWGNGFIVLVNC. Residues 33 to 52 are Cytoplasmic-facing; it reads IDWLKRRDVSLIDIILISLA. Residues 53–72 traverse the membrane as a helical segment; sequence ISRICLLXVISLDGFFMLLF. Over 73 to 86 the chain is Extracellular; the sequence is PTTYGNSVLVSIVB. A helical transmembrane segment spans residues 87–109; that stretch reads IVWTFANNSSLWFTSCLSIFYLL. At 110–128 the chain is on the cytoplasmic side; that stretch reads KIANISHPFFFWLKLKINK. Residues 129 to 146 form a helical membrane-spanning segment; it reads VILAILLGSFLISLVISV. Residues 147–180 lie on the Extracellular side of the membrane; sequence XMNDDMWYHLFKVSHEENITWEFKVSKIPGTFKQ. Asparagine 164 is a glycosylation site (N-linked (GlcNAc...) asparagine). Residues 181–203 form a helical membrane-spanning segment; sequence LTLNLGAMVPFILCLISFSLLLF. Topologically, residues 204–234 are cytoplasmic; the sequence is SLVRHTKQIQLXATGFRDPSTEAHMRAIKAV. Residues 235–257 traverse the membrane as a helical segment; the sequence is IIFLLLLIVYYPVFLVMTSSALI. Residues 258–261 are Extracellular-facing; sequence PQGK. Residues 262–284 traverse the membrane as a helical segment; it reads LVLMIGDIVTITFPSSHSFILIM. The Cytoplasmic segment spans residues 285–312; it reads GNSKLREAFLKMLRFVKRFLRRRKPFVP.

It belongs to the G-protein coupled receptor T2R family.

Its subcellular location is the membrane. Gustducin-coupled receptor implicated in the perception of bitter compounds in the oral cavity and the gastrointestinal tract. Signals through PLCB2 and the calcium-regulated cation channel TRPM5. This is Taste receptor type 2 member 9 (TAS2R9) from Pongo pygmaeus (Bornean orangutan).